A 314-amino-acid chain; its full sequence is 4-hydroxy-3-methylbut-2-enyl diphosphate reductase (314 aa).

Cysteine 12 is a binding site for [4Fe-4S] cluster. The (2E)-4-hydroxy-3-methylbut-2-enyl diphosphate site is built by histidine 41 and histidine 74. Histidine 41 and histidine 74 together coordinate dimethylallyl diphosphate. 2 residues coordinate isopentenyl diphosphate: histidine 41 and histidine 74. Cysteine 96 contributes to the [4Fe-4S] cluster binding site. Histidine 124 serves as a coordination point for (2E)-4-hydroxy-3-methylbut-2-enyl diphosphate. Dimethylallyl diphosphate is bound at residue histidine 124. Histidine 124 is a binding site for isopentenyl diphosphate. Catalysis depends on glutamate 126, which acts as the Proton donor. (2E)-4-hydroxy-3-methylbut-2-enyl diphosphate is bound at residue threonine 168. Cysteine 198 contacts [4Fe-4S] cluster. The (2E)-4-hydroxy-3-methylbut-2-enyl diphosphate site is built by serine 226, serine 227, asparagine 228, and serine 270. Dimethylallyl diphosphate is bound by residues serine 226, serine 227, asparagine 228, and serine 270. Isopentenyl diphosphate is bound by residues serine 226, serine 227, asparagine 228, and serine 270.

Belongs to the IspH family. The cofactor is [4Fe-4S] cluster.

The enzyme catalyses isopentenyl diphosphate + 2 oxidized [2Fe-2S]-[ferredoxin] + H2O = (2E)-4-hydroxy-3-methylbut-2-enyl diphosphate + 2 reduced [2Fe-2S]-[ferredoxin] + 2 H(+). The catalysed reaction is dimethylallyl diphosphate + 2 oxidized [2Fe-2S]-[ferredoxin] + H2O = (2E)-4-hydroxy-3-methylbut-2-enyl diphosphate + 2 reduced [2Fe-2S]-[ferredoxin] + 2 H(+). It functions in the pathway isoprenoid biosynthesis; dimethylallyl diphosphate biosynthesis; dimethylallyl diphosphate from (2E)-4-hydroxy-3-methylbutenyl diphosphate: step 1/1. The protein operates within isoprenoid biosynthesis; isopentenyl diphosphate biosynthesis via DXP pathway; isopentenyl diphosphate from 1-deoxy-D-xylulose 5-phosphate: step 6/6. Its function is as follows. Catalyzes the conversion of 1-hydroxy-2-methyl-2-(E)-butenyl 4-diphosphate (HMBPP) into a mixture of isopentenyl diphosphate (IPP) and dimethylallyl diphosphate (DMAPP). Acts in the terminal step of the DOXP/MEP pathway for isoprenoid precursor biosynthesis. The sequence is that of 4-hydroxy-3-methylbut-2-enyl diphosphate reductase from Pseudomonas aeruginosa (strain LESB58).